The primary structure comprises 531 residues: MTSLTTQTLIITIFLLTIPTSFASPPSLEDVFAQCVTDFKPSNPKSPIQNYIYTQRSPNFLTILNNYVRNLRYFNNMTRKPVAIVAAADVTHIQATITCAKKLGLQLRIRSGGHDYDGMSYLSTIDFVVLDMFNLRSINIDPKLDTAWVQSGATLGEIYYGVANKSNDLRGFPAGICPGLGAGGHFSGGGYGNMMRKYGLSIDNIIDAKIVDAKGRVLDRSSMGEDLFWALRGGGAASFCVVLAWKIKLVPVPAKVTVFNIETFGNTGSVNTTELVAKWQEIADKIDNDLFIRLTLGSSNKTVKASFMGMYLGNSSNLLEIMNAKFPELGLIKRECIEMKWIESVLFWLGIPPGTAPTTSMLNRIPQKQIYLKRKSDYVQKPISRTGLESIFKIMTENENVTMAFNPYGGRMSEIPSTETAFPHRAGNMFKIQYAANWFVPGEAVAKDCLSQTERLFEAMSPYVSKNPREAFLNYRDVDIGKSLNSTYEEGKVYGFKYFKDNFEKLVKIKSRVDPDNFFRYEQSIPVLSSH.

A signal peptide spans 1-23 (MTSLTTQTLIITIFLLTIPTSFA). C35 and C99 are joined by a disulfide. N-linked (GlcNAc...) asparagine glycans are attached at residues N76, N164, N271, N300, N314, N400, and N485. Positions 77–252 (MTRKPVAIVA…LAWKIKLVPV (176 aa)) constitute an FAD-binding PCMH-type domain. The 6-(S-cysteinyl)-8alpha-(pros-histidyl)-FAD (His-Cys) cross-link spans 114 to 177 (HDYDGMSYLS…DLRGFPAGIC (64 aa)).

This sequence belongs to the oxygen-dependent FAD-linked oxidoreductase family. The cofactor is FAD. Post-translationally, the FAD cofactor is bound via a bicovalent 6-S-cysteinyl, 8alpha-N1-histidyl FAD linkage. As to expression, accumulates in cell walls of etiolated hypocotyls.

The protein localises to the secreted. It localises to the cell wall. The polypeptide is Berberine bridge enzyme-like 9 (Arabidopsis thaliana (Mouse-ear cress)).